A 264-amino-acid polypeptide reads, in one-letter code: 3-methyl-2-oxobutanoate hydroxymethyltransferase (264 aa).

The Mg(2+) site is built by Asp45 and Asp84. Residues 45-46, Asp84, and Lys112 contribute to the 3-methyl-2-oxobutanoate site; that span reads DS. Glu114 is a Mg(2+) binding site. The Proton acceptor role is filled by Glu181.

It belongs to the PanB family. As to quaternary structure, homodecamer; pentamer of dimers. The cofactor is Mg(2+).

Its subcellular location is the cytoplasm. It carries out the reaction 3-methyl-2-oxobutanoate + (6R)-5,10-methylene-5,6,7,8-tetrahydrofolate + H2O = 2-dehydropantoate + (6S)-5,6,7,8-tetrahydrofolate. It functions in the pathway cofactor biosynthesis; (R)-pantothenate biosynthesis; (R)-pantoate from 3-methyl-2-oxobutanoate: step 1/2. Its function is as follows. Catalyzes the reversible reaction in which hydroxymethyl group from 5,10-methylenetetrahydrofolate is transferred onto alpha-ketoisovalerate to form ketopantoate. In Vibrio campbellii (strain ATCC BAA-1116), this protein is 3-methyl-2-oxobutanoate hydroxymethyltransferase.